The chain runs to 393 residues: S-adenosylmethionine synthase 2 (393 aa).

Glu9 contributes to the Mg(2+) binding site. Position 15 (His15) interacts with ATP. Glu43 lines the K(+) pocket. The L-methionine site is built by Glu56 and Gln99. Residues 167–169 (DGK), 235–238 (SGRF), Asp246, 252–253 (RK), Ala269, Lys273, and Lys277 contribute to the ATP site. Residue Asp246 coordinates L-methionine. Lys277 serves as a coordination point for L-methionine.

Belongs to the AdoMet synthase family. Homotetramer. Interacts with GRF3. The cofactor is Mn(2+). It depends on Mg(2+) as a cofactor. Requires Co(2+) as cofactor. K(+) is required as a cofactor. Highly expressed in stems and roots. Detected in trichomes (at the protein level).

The protein localises to the cytoplasm. It carries out the reaction L-methionine + ATP + H2O = S-adenosyl-L-methionine + phosphate + diphosphate. The protein operates within amino-acid biosynthesis; S-adenosyl-L-methionine biosynthesis; S-adenosyl-L-methionine from L-methionine: step 1/1. With respect to regulation, inhibited by 5,5'-dithiobis-2-nitrobenzoic acid (DTNB) and N-ethylmaleimide (NEM) (in vitro). Catalyzes the formation of S-adenosylmethionine from methionine and ATP. The reaction comprises two steps that are both catalyzed by the same enzyme: formation of S-adenosylmethionine (AdoMet) and triphosphate, and subsequent hydrolysis of the triphosphate. This chain is S-adenosylmethionine synthase 2 (SAM2), found in Arabidopsis thaliana (Mouse-ear cress).